A 172-amino-acid polypeptide reads, in one-letter code: Small ribosomal subunit protein uS5 (172 aa).

In terms of domain architecture, S5 DRBM spans 17-80 (LREKMISVNR…DEARRKMVKV (64 aa)).

The protein belongs to the universal ribosomal protein uS5 family. In terms of assembly, part of the 30S ribosomal subunit. Contacts proteins S4 and S8.

In terms of biological role, with S4 and S12 plays an important role in translational accuracy. Its function is as follows. Located at the back of the 30S subunit body where it stabilizes the conformation of the head with respect to the body. In Cupriavidus metallidurans (strain ATCC 43123 / DSM 2839 / NBRC 102507 / CH34) (Ralstonia metallidurans), this protein is Small ribosomal subunit protein uS5.